The following is a 200-amino-acid chain: MILQAALFLAGLTVVSGSICCPPKQFNSYQYVTFVNSTTTIRALYYIVYDGDNQRYLITGDRNNKQLVGTTKVIYDYKKRIAYSIDAKARTCSKFPVQGQFEDQENVCVPGGAEILGPLFYGYNQSRLNSQSYAYNTTSLDGSHHNVVTTVSEDDCVPIVICTITTGGPGGNSLYTVGYNDFYPGIKDITVFDIPPYCNA.

A signal peptide spans 1-17 (MILQAALFLAGLTVVSG). N-linked (GlcNAc...) asparagine glycans are attached at residues asparagine 36, asparagine 124, and asparagine 136.

Belongs to the ependymin family. In terms of tissue distribution, component of the acid-soluble and acid-insoluble organic matrix of prismatic shell layers (at protein level). Expressed discontinuously in the anterior zone of the outer fold of the mantle where its expression correlates with shell pigmentation.

It is found in the secreted. The chain is Ependymin-related protein 1 from Haliotis asinina (Donkey's ear abalone).